A 446-amino-acid polypeptide reads, in one-letter code: Pre-rRNA-processing protein crb3/ipi3 (446 aa).

5 WD repeats span residues 74 to 113 (ILPE…LIYF), 116 to 155 (AHYQ…DQNS), 172 to 214 (GHKR…LLTT), 216 to 257 (ALPS…SNNV), and 294 to 333 (SCQS…VLRR).

Belongs to the WD repeat IPI3/WDR18 family. As to quaternary structure, component of the RIX1 complex, composed of ipi1, rix1/ipi2 and crb3/ipi3 in a 1:2:2 stoichiometry. The complex interacts (via rix1) with mdn1 (via its hexameric AAA ATPase ring) and the pre-60S ribosome particles. Interacts with rix1, gcr3 and Las1.

The protein localises to the nucleus. It is found in the chromosome. Its function is as follows. Required for both pre-rRNA processing and heterochromatic gene silencing. Functionally, component of the RIX1 complex required for processing of ITS2 sequences from 35S pre-rRNA. The sequence is that of Pre-rRNA-processing protein crb3/ipi3 (crb3) from Schizosaccharomyces pombe (strain 972 / ATCC 24843) (Fission yeast).